The chain runs to 1378 residues: Tonsoku-like protein (1378 aa).

8 TPR repeats span residues 27–60, 67–100, 107–147, 162–195, 202–235, 242–275, 311–344, and 352–385; these read AALC…RERA, AVAH…AHSL, QRAW…VDEE, TRLY…AEQN, FRAR…AHTM, SECC…GSQK, MVIC…AELL, and AIIH…RSGN. The segment at 475 to 524 is disordered; sequence AATAESEALEAGEVELSEGEDDTDGLTPQLEEDEELQGHLGRRKGSKWNR. A compositionally biased stretch (acidic residues) spans 481–509; the sequence is EALEAGEVELSEGEDDTDGLTPQLEEDEE. Residues 514-523 show a composition bias toward basic residues; it reads LGRRKGSKWN. ANK repeat units lie at residues 528–557, 561–590, and 597–626; these read MGET…PLNP, CGWT…AVDD, and EGIT…SVTL. The interval 667–789 is disordered; it reads AASGQDPHSS…REAATASTSR (123 aa). The segment covering 672–684 has biased composition (polar residues); the sequence is DPHSSQAFHTPSS. Pro residues predominate over residues 691-702; it reads TSPPLSPCPEPP. The residue at position 719 (serine 719) is a Phosphoserine. Composition is skewed to low complexity over residues 736–753 and 777–789; these read GPAS…AGPA and ASNR…STSR. Arginine 797 is modified (omega-N-methylarginine). A disordered region spans residues 842 to 933; sequence LTRSRRPRPR…PLGPAPPPPI (92 aa). 2 stretches are compositionally biased toward polar residues: residues 883 to 899 and 907 to 918; these read CMQS…SSLA and STPRVSEPSGDS. 7 LRR repeats span residues 1069 to 1093, 1097 to 1122, 1128 to 1151, 1188 to 1212, 1247 to 1270, 1275 to 1300, and 1331 to 1354; these read HTAL…LVAA, MPSL…AMGL, LQSL…SLAS, AEHL…TLQS, GCAL…DLCR, CPSL…LLST, and AAQL…ALRQ.

It belongs to the Tonsoku family. In terms of assembly, component of the MMS22L-TONSL complex, a complex at least composed of MMS22L and TONSL/NFKBIL2. Interacts with the MCM complex, the FACT complex and the RPA complex. Interacts with MCM5; the interaction is direct. Binds histones, with a strong preference for histone H3.1 (histones H3.1 and H3-4/H3.1t). Interacts (via ANK repeats) with histone H4; specifically binds histone H4 lacking methylation at 'Lys-20' (H4K20me0). May interact with DNAJC9; the interaction seems to be histone-dependent. As to expression, expressed in heart, skeletal muscle and tracheal epithelial cells.

It is found in the nucleus. The protein resides in the chromosome. It localises to the cytoplasm. Component of the MMS22L-TONSL complex, a complex that promotes homologous recombination-mediated repair of double-strand breaks (DSBs) at stalled or collapsed replication forks. The MMS22L-TONSL complex is required to maintain genome integrity during DNA replication. It mediates the assembly of RAD51 filaments on single-stranded DNA (ssDNA): the MMS22L-TONSL complex is recruited to DSBs following histone replacement by histone chaperones and eviction of the replication protein A complex (RPA/RP-A) from DSBs. Following recruitment to DSBs, the TONSL-MMS22L complex promotes recruitment of RAD51 filaments and subsequent homologous recombination. Within the complex, TONSL acts as a histone reader, which recognizes and binds newly synthesized histones following their replacement by histone chaperones. Specifically binds histone H4 lacking methylation at 'Lys-20' (H4K20me0) and histone H3.1. The protein is Tonsoku-like protein of Homo sapiens (Human).